An 87-amino-acid chain; its full sequence is MADSEDTSVILQGIDTINSVEGLEEDGYLSDEDTSLSNELADAQRQWEESLQQLNKLLNWVLLPLLGKYIGRRMAKTLWSRFIEHFV.

Over 1 to 53 the chain is Cytoplasmic; that stretch reads MADSEDTSVILQGIDTINSVEGLEEDGYLSDEDTSLSNELADAQRQWEESLQQ. Residues 54–71 traverse the membrane as a helical segment; it reads LNKLLNWVLLPLLGKYIG. The Mitochondrial intermembrane portion of the chain corresponds to 72 to 87; it reads RRMAKTLWSRFIEHFV.

It belongs to the MIM2 family. In terms of assembly, component of the MIM complex containing at least MIM1 and MIM2. Interacts with MIM1; interaction is direct.

It localises to the mitochondrion outer membrane. Component of the MIM complex required for outer membrane protein import. Involved in import of the subset of proteins with multiple alpha-helical transmembrane segments, including UGO1, TOM20 and FZO1. The sequence is that of Mitochondrial import protein 2 from Saccharomyces cerevisiae (strain ATCC 204508 / S288c) (Baker's yeast).